Reading from the N-terminus, the 245-residue chain is Orotidine 5'-phosphate decarboxylase (245 aa).

Substrate-binding positions include Asp-22, Lys-44, 71 to 80, Thr-131, Arg-192, Gln-201, Gly-221, and Arg-222; that span reads DLKFHDIPNT. Lys-73 serves as the catalytic Proton donor.

The protein belongs to the OMP decarboxylase family. Type 1 subfamily. As to quaternary structure, homodimer.

It catalyses the reaction orotidine 5'-phosphate + H(+) = UMP + CO2. The protein operates within pyrimidine metabolism; UMP biosynthesis via de novo pathway; UMP from orotate: step 2/2. In terms of biological role, catalyzes the decarboxylation of orotidine 5'-monophosphate (OMP) to uridine 5'-monophosphate (UMP). This chain is Orotidine 5'-phosphate decarboxylase, found in Escherichia coli O45:K1 (strain S88 / ExPEC).